The following is a 114-amino-acid chain: Dihydroneopterin monophosphate aldolase (114 aa).

Zn(2+)-binding residues include His-15, His-26, and His-28.

Belongs to the PTPS family. Zn(2+) serves as cofactor.

It catalyses the reaction 7,8-dihydroneopterin 3'-phosphate = glycolaldehyde phosphate + 6-hydroxymethyl-7,8-dihydropterin. Its function is as follows. Catalyzes the conversion of 7,8-dihydroneopterin monophosphate (H2NMP) to 6-hydroxymethyl-7,8-dihydropterin (6-HMD). Cannot use 7,8-dihydroneopterin (H2Neo) or 7,8-dihydroneopterin triphosphate (H2NTP) as substrate. This chain is Dihydroneopterin monophosphate aldolase, found in Pyrococcus furiosus (strain ATCC 43587 / DSM 3638 / JCM 8422 / Vc1).